We begin with the raw amino-acid sequence, 450 residues long: Chromosomal replication initiator protein DnaA (450 aa).

The tract at residues 1 to 84 is domain I, interacts with DnaA modulators; that stretch reads MTENEQIFWN…AVDYVYEDNL (84 aa). A domain II region spans residues 84–109; sequence LMIEQQHQGQQGYTEQAFQQLPAVQS. The domain III, AAA+ region stretch occupies residues 110 to 328; the sequence is DLNPKYSFDN…GALKDISLVA (219 aa). The ATP site is built by G154, G156, K157, and T158. Residues 329 to 450 form a domain IV, binds dsDNA region; that stretch reads NFKQIDTITV…EIETIKNKIK (122 aa).

It belongs to the DnaA family. Oligomerizes as a right-handed, spiral filament on DNA at oriC.

It is found in the cytoplasm. Its function is as follows. Plays an essential role in the initiation and regulation of chromosomal replication. ATP-DnaA binds to the origin of replication (oriC) to initiate formation of the DNA replication initiation complex once per cell cycle. Binds the DnaA box (a 9 base pair repeat at the origin) and separates the double-stranded (ds)DNA. Forms a right-handed helical filament on oriC DNA; dsDNA binds to the exterior of the filament while single-stranded (ss)DNA is stabiized in the filament's interior. The ATP-DnaA-oriC complex binds and stabilizes one strand of the AT-rich DNA unwinding element (DUE), permitting loading of DNA polymerase. After initiation quickly degrades to an ADP-DnaA complex that is not apt for DNA replication. Binds acidic phospholipids. This is Chromosomal replication initiator protein DnaA from Streptococcus equi subsp. zooepidemicus (strain H70).